The sequence spans 412 residues: Regulator of microtubule dynamics protein 2 (412 aa).

Residues 9 to 28 form a helical membrane-spanning segment; the sequence is LLLGIMAGTAGISLLVLWYH. Ser-51 bears the Phosphoserine mark. Residues 72–110 adopt a coiled-coil conformation; the sequence is QLQILEKLNELLTNVEELKEEIKFLKETIPKLEECIQDE. At Ser-121 the chain carries Phosphoserine. The interval 122–153 is disordered; sequence PQHRARKKKTTTTTVQRPATSNSSEEAESEGG. Thr-141 is subject to Phosphothreonine. A Phosphotyrosine modification is found at Tyr-154. Phosphothreonine occurs at positions 156 and 159.

Belongs to the RMDN family. As to quaternary structure, interacts with microtubules.

Its subcellular location is the membrane. It is found in the cytoplasm. It localises to the cytoskeleton. The protein localises to the spindle. The protein resides in the spindle pole. The protein is Regulator of microtubule dynamics protein 2 (Rmdn2) of Rattus norvegicus (Rat).